Reading from the N-terminus, the 122-residue chain is uncharacterized protein (122 aa).

Residues 1–15 (MAEPGGRGDYRKDGR) are compositionally biased toward basic and acidic residues. Residues 1–49 (MAEPGGRGDYRKDGRLPSLSRSPLSTTLGTSPACGLEIPPTSGARPDGS) form a disordered region. Over residues 16–32 (LPSLSRSPLSTTLGTSP) the composition is skewed to low complexity.

This is an uncharacterized protein from Homo sapiens (Human).